The following is a 4885-amino-acid chain: Centrosome-associated protein CEP530 (4885 aa).

Residues 1437–1528 (VAEYEAETRG…GREKDQLRSE (92 aa)) are a coiled coil.

Its subcellular location is the cytoplasm. It localises to the cytoskeleton. The protein localises to the microtubule organizing center. The protein resides in the centrosome. Functionally, required for proper nuclei segregation during the cell division. Plays a role in coordination of karyokinesis and cytokinesis during the tachyzoite cell cycle. The polypeptide is Centrosome-associated protein CEP530 (Toxoplasma gondii (strain ATCC 50611 / Me49)).